Consider the following 77-residue polypeptide: Acyl carrier protein (77 aa).

The 76-residue stretch at 2–77 folds into the Carrier domain; sequence AEVFDRVKEI…DAVDYINSKA (76 aa). Residue Ser37 is modified to O-(pantetheine 4'-phosphoryl)serine.

The protein belongs to the acyl carrier protein (ACP) family. In terms of processing, 4'-phosphopantetheine is transferred from CoA to a specific serine of apo-ACP by AcpS. This modification is essential for activity because fatty acids are bound in thioester linkage to the sulfhydryl of the prosthetic group.

The protein resides in the cytoplasm. It functions in the pathway lipid metabolism; fatty acid biosynthesis. Carrier of the growing fatty acid chain in fatty acid biosynthesis. The chain is Acyl carrier protein from Oceanobacillus iheyensis (strain DSM 14371 / CIP 107618 / JCM 11309 / KCTC 3954 / HTE831).